The sequence spans 384 residues: PqqA peptide cyclase (384 aa).

The Radical SAM core domain occupies 5–220 (VGLPLWLLAE…TNEYREKLKA (216 aa)). Positions 19, 23, and 26 each coordinate [4Fe-4S] cluster.

It belongs to the radical SAM superfamily. PqqE family. As to quaternary structure, interacts with PqqD. The interaction is necessary for activity of PqqE. [4Fe-4S] cluster serves as cofactor.

It catalyses the reaction [PQQ precursor protein] + S-adenosyl-L-methionine = E-Y cross-linked-[PQQ precursor protein] + 5'-deoxyadenosine + L-methionine + H(+). It participates in cofactor biosynthesis; pyrroloquinoline quinone biosynthesis. Functionally, catalyzes the cross-linking of a glutamate residue and a tyrosine residue in the PqqA protein as part of the biosynthesis of pyrroloquinoline quinone (PQQ). The protein is PqqA peptide cyclase of Acinetobacter baumannii (strain AB0057).